Consider the following 638-residue polypeptide: Probable ATP-binding protein YheS (638 aa).

ABC transporter domains are found at residues 2–246 and 313–531; these read IIFS…AQQT and VMIE…STSE. Residues 34–41 and 349–356 each bind ATP; these read GKNGCGKS and GKNGAGKS. The interval 525 to 563 is disordered; sequence EQNSTSENKVSEKVGDNENSVQNRKEQKRREAELRQQTA. Residues 547–558 show a composition bias toward basic and acidic residues; the sequence is NRKEQKRREAEL.

This sequence belongs to the ABC transporter superfamily. ABCF family. YheS subfamily.

Its function is as follows. Genetic data indicate it may be involved in ribosome assembly or function. In Haemophilus influenzae (strain ATCC 51907 / DSM 11121 / KW20 / Rd), this protein is Probable ATP-binding protein YheS.